Reading from the N-terminus, the 628-residue chain is 1-deoxy-D-xylulose-5-phosphate synthase (628 aa).

Thiamine diphosphate contacts are provided by residues His-72 and 113 to 115 (GHA). Position 144 (Asp-144) interacts with Mg(2+). Residues 145–146 (GA), Asn-174, Tyr-287, and Glu-370 contribute to the thiamine diphosphate site. Asn-174 provides a ligand contact to Mg(2+).

This sequence belongs to the transketolase family. DXPS subfamily. In terms of assembly, homodimer. Requires Mg(2+) as cofactor. The cofactor is thiamine diphosphate.

The catalysed reaction is D-glyceraldehyde 3-phosphate + pyruvate + H(+) = 1-deoxy-D-xylulose 5-phosphate + CO2. It participates in metabolic intermediate biosynthesis; 1-deoxy-D-xylulose 5-phosphate biosynthesis; 1-deoxy-D-xylulose 5-phosphate from D-glyceraldehyde 3-phosphate and pyruvate: step 1/1. Its function is as follows. Catalyzes the acyloin condensation reaction between C atoms 2 and 3 of pyruvate and glyceraldehyde 3-phosphate to yield 1-deoxy-D-xylulose-5-phosphate (DXP). This is 1-deoxy-D-xylulose-5-phosphate synthase from Prochlorococcus marinus (strain NATL2A).